Here is an 846-residue protein sequence, read N- to C-terminus: Translation initiation factor IF-2 (846 aa).

Residues 198 to 219 (YKREEEEKKSKAKKAGGKGFKK) form a disordered region. Over residues 207–219 (SKAKKAGGKGFKK) the composition is skewed to basic residues. The region spanning 345 to 512 (SRAPVVTIMG…AVLLQSEVLE (168 aa)) is the tr-type G domain. A G1 region spans residues 354–361 (GHVDHGKT). Residue 354–361 (GHVDHGKT) participates in GTP binding. Positions 379 to 383 (GITQH) are G2. The segment at 400-403 (DTPG) is G3. Residues 400–404 (DTPGH) and 454–457 (NKID) each bind GTP. Residues 454-457 (NKID) form a G4 region. The tract at residues 490–492 (SAK) is G5.

This sequence belongs to the TRAFAC class translation factor GTPase superfamily. Classic translation factor GTPase family. IF-2 subfamily.

The protein resides in the cytoplasm. Its function is as follows. One of the essential components for the initiation of protein synthesis. Protects formylmethionyl-tRNA from spontaneous hydrolysis and promotes its binding to the 30S ribosomal subunits. Also involved in the hydrolysis of GTP during the formation of the 70S ribosomal complex. The sequence is that of Translation initiation factor IF-2 from Francisella tularensis subsp. novicida (strain U112).